Here is a 434-residue protein sequence, read N- to C-terminus: MSIITDVYAREVLDSRGNPTLEVEVYTESGAFGRGMVPSGASTGEHEAVELRDGDKARYGGLGTQKAVDNVNNVIAEHIIGFDVRDQQGIDRAMIALDGTPNKGKLGANAILGVSIAVARAAADYLEVPLYSYLGGFNTKVLPTPMMNIINGGSHSDAPIAFQEFMIVPAGAPTFKEALRWGAEIFHALKKILKERGLETAVGDEGGFAPRFDGTEDGVETIIKAIEAAGYVPGKDVFIGLDCASSEFYDAERKVYDYTKFEGEGAAVRTAAEQIDYLEELVNKYPIITIEDGMDENDWDGWKALTERLGDKVQLVGDDFFVTNTAYLEKGIAEHAANSILIKVNQIGTLTETFDAIEMAKEAGYTAVVSHRSGETEDSTIADIAVATNAGQIKTGSLSRTDRIAKYNQLLRIEDQLGEVAEYRGLKSFYNLKK.

Gln-163 contributes to the (2R)-2-phosphoglycerate binding site. Glu-205 (proton donor) is an active-site residue. Mg(2+) contacts are provided by Asp-242, Glu-291, and Asp-318. Positions 343, 372, 373, and 394 each coordinate (2R)-2-phosphoglycerate. Lys-343 acts as the Proton acceptor in catalysis.

Belongs to the enolase family. The cofactor is Mg(2+).

Its subcellular location is the cytoplasm. It localises to the secreted. The protein localises to the cell surface. The enzyme catalyses (2R)-2-phosphoglycerate = phosphoenolpyruvate + H2O. The protein operates within carbohydrate degradation; glycolysis; pyruvate from D-glyceraldehyde 3-phosphate: step 4/5. Its function is as follows. Catalyzes the reversible conversion of 2-phosphoglycerate (2-PG) into phosphoenolpyruvate (PEP). It is essential for the degradation of carbohydrates via glycolysis. This Streptococcus thermophilus (strain CNRZ 1066) protein is Enolase.